A 432-amino-acid chain; its full sequence is Trigger factor (432 aa).

One can recognise a PPIase FKBP-type domain in the interval 161 to 246 (EDRVTIDFTG…LKKVEERELP (86 aa)).

The protein belongs to the FKBP-type PPIase family. Tig subfamily. In terms of assembly, homodimer and monomer. In vivo most of the ribosomes are in complex with monomeric TF. Uncomplexed TF, however, is in a monomer-dimer equilibrium with approximately two thirds of TF existing in a dimeric state.

The protein localises to the cytoplasm. The enzyme catalyses [protein]-peptidylproline (omega=180) = [protein]-peptidylproline (omega=0). Involved in protein export. Acts as a chaperone by maintaining the newly synthesized protein in an open conformation. Functions as a peptidyl-prolyl cis-trans isomerase. This is Trigger factor from Escherichia fergusonii (strain ATCC 35469 / DSM 13698 / CCUG 18766 / IAM 14443 / JCM 21226 / LMG 7866 / NBRC 102419 / NCTC 12128 / CDC 0568-73).